Consider the following 429-residue polypeptide: Histidinol dehydrogenase (429 aa).

The NAD(+) site is built by Tyr-127, Gln-188, and Asn-211. Substrate contacts are provided by Ser-234, Gln-256, and His-259. 2 residues coordinate Zn(2+): Gln-256 and His-259. Catalysis depends on proton acceptor residues Glu-324 and His-325. The substrate site is built by His-325, Asp-358, Glu-412, and His-417. Asp-358 serves as a coordination point for Zn(2+). His-417 contacts Zn(2+).

This sequence belongs to the histidinol dehydrogenase family. Zn(2+) is required as a cofactor.

It carries out the reaction L-histidinol + 2 NAD(+) + H2O = L-histidine + 2 NADH + 3 H(+). The protein operates within amino-acid biosynthesis; L-histidine biosynthesis; L-histidine from 5-phospho-alpha-D-ribose 1-diphosphate: step 9/9. Functionally, catalyzes the sequential NAD-dependent oxidations of L-histidinol to L-histidinaldehyde and then to L-histidine. The protein is Histidinol dehydrogenase of Bacillus cereus (strain ATCC 14579 / DSM 31 / CCUG 7414 / JCM 2152 / NBRC 15305 / NCIMB 9373 / NCTC 2599 / NRRL B-3711).